The primary structure comprises 417 residues: Putative F-box protein At4g21240 (417 aa).

Residues 1 to 12 show a composition bias toward acidic residues; the sequence is MDRREEEEEETG. Positions 1–25 are disordered; the sequence is MDRREEEEEETGYGEKGTRNQSKED. Residues 16–25 show a composition bias toward basic and acidic residues; it reads KGTRNQSKED. The F-box domain occupies 30-76; the sequence is GKIFELIPLDMIPDILLRLPAKSAVRFRIVSKLWLSITTRPYFIRSF.

The sequence is that of Putative F-box protein At4g21240 from Arabidopsis thaliana (Mouse-ear cress).